We begin with the raw amino-acid sequence, 324 residues long: Beta-ketoacyl-[acyl-carrier-protein] synthase III (324 aa).

Active-site residues include cysteine 113 and histidine 251. The ACP-binding stretch occupies residues 252–256; that stretch reads QANKR. Residue asparagine 281 is part of the active site.

Belongs to the thiolase-like superfamily. FabH family. Homodimer.

Its subcellular location is the cytoplasm. The catalysed reaction is malonyl-[ACP] + acetyl-CoA + H(+) = 3-oxobutanoyl-[ACP] + CO2 + CoA. The protein operates within lipid metabolism; fatty acid biosynthesis. In terms of biological role, catalyzes the condensation reaction of fatty acid synthesis by the addition to an acyl acceptor of two carbons from malonyl-ACP. Catalyzes the first condensation reaction which initiates fatty acid synthesis and may therefore play a role in governing the total rate of fatty acid production. Possesses both acetoacetyl-ACP synthase and acetyl transacylase activities. Its substrate specificity determines the biosynthesis of branched-chain and/or straight-chain of fatty acids. The polypeptide is Beta-ketoacyl-[acyl-carrier-protein] synthase III (Bartonella henselae (strain ATCC 49882 / DSM 28221 / CCUG 30454 / Houston 1) (Rochalimaea henselae)).